The sequence spans 244 residues: 15,16-dihydrobiliverdin:ferredoxin oxidoreductase (244 aa).

This sequence belongs to the HY2 family.

The enzyme catalyses 15,16-dihydrobiliverdin + oxidized 2[4Fe-4S]-[ferredoxin] = biliverdin IXalpha + reduced 2[4Fe-4S]-[ferredoxin] + 2 H(+). Functionally, catalyzes the two-electron reduction of biliverdin IX-alpha at the C15 methine bridge. The chain is 15,16-dihydrobiliverdin:ferredoxin oxidoreductase (pebA) from Nostoc punctiforme (strain ATCC 29133 / PCC 73102).